The primary structure comprises 95 residues: Nucleoid-associated protein MMOB0740 (95 aa).

The protein belongs to the YbaB/EbfC family. As to quaternary structure, homodimer.

It localises to the cytoplasm. Its subcellular location is the nucleoid. Its function is as follows. Binds to DNA and alters its conformation. May be involved in regulation of gene expression, nucleoid organization and DNA protection. In Mycoplasma mobile (strain ATCC 43663 / 163K / NCTC 11711) (Mesomycoplasma mobile), this protein is Nucleoid-associated protein MMOB0740.